The chain runs to 196 residues: Putative lipopolysaccharide biosynthesis O-acetyl transferase WbbJ (196 aa).

It belongs to the transferase hexapeptide repeat family.

The protein operates within bacterial outer membrane biogenesis; lipopolysaccharide biosynthesis. Its function is as follows. Putative O-acetyltransferase that transfers an O-acetyl group to the O antigen. In Escherichia coli (strain K12), this protein is Putative lipopolysaccharide biosynthesis O-acetyl transferase WbbJ (wbbJ).